Consider the following 255-residue polypeptide: Ribonuclease HII (255 aa).

Residues 72 to 255 (RLIAGVDEAG…KTFAPVQSYC (184 aa)) form the RNase H type-2 domain. 3 residues coordinate a divalent metal cation: Asp78, Glu79, and Asp170.

It belongs to the RNase HII family. Mn(2+) is required as a cofactor. Mg(2+) serves as cofactor.

The protein resides in the cytoplasm. The catalysed reaction is Endonucleolytic cleavage to 5'-phosphomonoester.. In terms of biological role, endonuclease that specifically degrades the RNA of RNA-DNA hybrids. The sequence is that of Ribonuclease HII from Bacillus velezensis (strain DSM 23117 / BGSC 10A6 / LMG 26770 / FZB42) (Bacillus amyloliquefaciens subsp. plantarum).